The following is a 462-amino-acid chain: Glutamate--tRNA ligase 2 (462 aa).

The short motif at 8-18 (PSPTGLLHVGG) is the 'HIGH' region element. A 'KMSKS' region motif is present at residues 227 to 231 (PLSKR). Residue Lys230 participates in ATP binding.

This sequence belongs to the class-I aminoacyl-tRNA synthetase family. Glutamate--tRNA ligase type 1 subfamily. As to quaternary structure, monomer.

The protein resides in the cytoplasm. The enzyme catalyses tRNA(Glu) + L-glutamate + ATP = L-glutamyl-tRNA(Glu) + AMP + diphosphate. Functionally, catalyzes the attachment of glutamate to tRNA(Glu) in a two-step reaction: glutamate is first activated by ATP to form Glu-AMP and then transferred to the acceptor end of tRNA(Glu). The protein is Glutamate--tRNA ligase 2 of Thermosipho melanesiensis (strain DSM 12029 / CIP 104789 / BI429).